The chain runs to 364 residues: DNA replication and repair protein RecF (364 aa).

Gly-30–Thr-37 contributes to the ATP binding site.

The protein belongs to the RecF family.

It localises to the cytoplasm. Functionally, the RecF protein is involved in DNA metabolism; it is required for DNA replication and normal SOS inducibility. RecF binds preferentially to single-stranded, linear DNA. It also seems to bind ATP. The polypeptide is DNA replication and repair protein RecF (Streptococcus uberis (strain ATCC BAA-854 / 0140J)).